Reading from the N-terminus, the 358-residue chain is DnaJ homolog subfamily C member 18 (358 aa).

Residues 82–146 enclose the J domain; sequence NYYEILGVSR…DKRLRYDEYG (65 aa). A helical transmembrane segment spans residues 228 to 248; that stretch reads AFIQLLPVLVIVIISVITQLL.

It localises to the endoplasmic reticulum membrane. Functionally, (Microbial infection) In case of infection by polyomavirus, involved in the virus endoplasmic reticulum membrane penetration and infection. Regulates the recruitment of DNAJB12:DNAJB14 into SV40-induced foci and all cooperate to guide SV40 across the endoplasmic reticulum membrane. The foci represent the site from which SV40 penetrates into the cytosol. The polypeptide is DnaJ homolog subfamily C member 18 (Homo sapiens (Human)).